Here is a 986-residue protein sequence, read N- to C-terminus: Resact receptor (986 aa).

The N-terminal stretch at 1-21 (MATTRLLFLLVVAVMITMVRS) is a signal peptide. At 22 to 507 (ATLHYNPTVI…GELCTNWGLY (486 aa)) the chain is on the extracellular side. N-linked (GlcNAc...) asparagine glycans are attached at residues asparagine 185, asparagine 361, and asparagine 410. Residues 508-528 (LGTLIPAFIIIFGGGLGYYIY) traverse the membrane as a helical segment. Residues 529-986 (RKRAYEAALD…SHSCSALHSS (458 aa)) lie on the Cytoplasmic side of the membrane. A Protein kinase domain is found at 568–836 (LSAISVISNA…PNIIEVRTML (269 aa)).

The protein localises to the membrane. It carries out the reaction GTP = 3',5'-cyclic GMP + diphosphate. Functionally, implicated as a cell-surface receptor on spermatozoa for 'resact' a chemotactic peptide, and on various other cells as a receptor for atrial natriuretic peptide. The protein is Resact receptor of Arbacia punctulata (Punctuate sea urchin).